The primary structure comprises 65 residues: MPKLKTRKAAAKRFRATGTGKIVRRKAGKSHLLEHKSSDKKRSMSKTTLVHERDELNVRLMLPYL.

A disordered region spans residues 24–48; that stretch reads RRKAGKSHLLEHKSSDKKRSMSKTT. Residues 31–42 show a composition bias toward basic and acidic residues; that stretch reads HLLEHKSSDKKR.

Belongs to the bacterial ribosomal protein bL35 family.

The sequence is that of Large ribosomal subunit protein bL35 from Nostoc punctiforme (strain ATCC 29133 / PCC 73102).